The chain runs to 400 residues: Jasmonate-induced oxygenase 1 (400 aa).

Residues 248–349 (DVGACLRVNY…RVSLAFFYNP (102 aa)) form the Fe2OG dioxygenase domain. Arg-254 contributes to the jasmonate binding site. 2-oxoglutarate is bound by residues Asn-256 and Tyr-258. Positions 273, 275, and 330 each coordinate Fe cation. Residues Arg-340 and Ser-342 each coordinate 2-oxoglutarate. Residues Arg-379 and Arg-383 each coordinate jasmonate.

The protein belongs to the iron/ascorbate-dependent oxidoreductase family. L-ascorbate serves as cofactor. It depends on Fe(2+) as a cofactor.

The catalysed reaction is jasmonate + 2-oxoglutarate + O2 = (1R,2R)-12-hydroxyjasmonate + succinate + CO2. In terms of biological role, 2-oxoglutarate-dependent dioxygenase involved in the oxidation of jasmonate (JA), a stress-induced phytohormone synthesized in response to attack by pathogens and herbivores, which triggers the activation of defense responses via the JA-mediated signaling pathway. Converts JA to 12-hydroxyjasmonate (12OH-JA), an inactive form of JA. Prevents over-accumulation of JA and indirectly its bioactive form JA-Ile under stress response. Acts as a negative regulator of JA-mediated defense signaling, by contributing to 12OH-JA accumulation, which represses JA defense responses upon infection by the fungal pathogen Botrytis cinerea and the herbivorous caterpillar Mamestra brassicae. This Arabidopsis thaliana (Mouse-ear cress) protein is Jasmonate-induced oxygenase 1.